Consider the following 55-residue polypeptide: MAKAVTIKIKLVSTADTGFYYVSKKNSRTMTDKMVKRKYDPVARKHVEFKEAKIK.

This sequence belongs to the bacterial ribosomal protein bL33 family.

The chain is Large ribosomal subunit protein bL33 from Rhodopseudomonas palustris (strain BisA53).